A 325-amino-acid polypeptide reads, in one-letter code: 7,8-didemethyl-8-hydroxy-5-deazariboflavin synthase (325 aa).

Residues 1-241 enclose the Radical SAM core domain; sequence MTYSKNVFVP…SDIAVQVAPN (241 aa). Cysteine 15, cysteine 19, and cysteine 22 together coordinate [4Fe-4S] cluster.

Belongs to the radical SAM superfamily. CofG family. Consists of two subunits, CofG and CofH. It depends on [4Fe-4S] cluster as a cofactor.

The catalysed reaction is 5-amino-5-(4-hydroxybenzyl)-6-(D-ribitylimino)-5,6-dihydrouracil + S-adenosyl-L-methionine = 7,8-didemethyl-8-hydroxy-5-deazariboflavin + 5'-deoxyadenosine + L-methionine + NH4(+) + H(+). It functions in the pathway cofactor biosynthesis; coenzyme F0 biosynthesis. In terms of biological role, catalyzes the radical-mediated synthesis of 7,8-didemethyl-8-hydroxy-5-deazariboflavin from 5-amino-5-(4-hydroxybenzyl)-6-(D-ribitylimino)-5,6-dihydrouracil. The protein is 7,8-didemethyl-8-hydroxy-5-deazariboflavin synthase of Methanosarcina barkeri (strain Fusaro / DSM 804).